Here is a 108-residue protein sequence, read N- to C-terminus: Nitrogenase-stabilizing/protective protein NifW (108 aa).

This sequence belongs to the NifW family. In terms of assembly, homotrimer; associates with NifD.

May protect the nitrogenase Fe-Mo protein from oxidative damage. This Zymomonas mobilis subsp. mobilis (strain ATCC 31821 / ZM4 / CP4) protein is Nitrogenase-stabilizing/protective protein NifW.